The following is a 557-amino-acid chain: Dihydroxy-acid dehydratase (557 aa).

Asp-78 serves as a coordination point for Mg(2+). Cys-119 lines the [2Fe-2S] cluster pocket. Mg(2+) is bound by residues Asp-120 and Lys-121. The residue at position 121 (Lys-121) is an N6-carboxylysine. Cys-192 is a binding site for [2Fe-2S] cluster. Residue Glu-442 participates in Mg(2+) binding. Ser-468 acts as the Proton acceptor in catalysis.

This sequence belongs to the IlvD/Edd family. As to quaternary structure, homodimer. It depends on [2Fe-2S] cluster as a cofactor. Mg(2+) serves as cofactor.

The enzyme catalyses (2R)-2,3-dihydroxy-3-methylbutanoate = 3-methyl-2-oxobutanoate + H2O. It carries out the reaction (2R,3R)-2,3-dihydroxy-3-methylpentanoate = (S)-3-methyl-2-oxopentanoate + H2O. It participates in amino-acid biosynthesis; L-isoleucine biosynthesis; L-isoleucine from 2-oxobutanoate: step 3/4. The protein operates within amino-acid biosynthesis; L-valine biosynthesis; L-valine from pyruvate: step 3/4. Functions in the biosynthesis of branched-chain amino acids. Catalyzes the dehydration of (2R,3R)-2,3-dihydroxy-3-methylpentanoate (2,3-dihydroxy-3-methylvalerate) into 2-oxo-3-methylpentanoate (2-oxo-3-methylvalerate) and of (2R)-2,3-dihydroxy-3-methylbutanoate (2,3-dihydroxyisovalerate) into 2-oxo-3-methylbutanoate (2-oxoisovalerate), the penultimate precursor to L-isoleucine and L-valine, respectively. The sequence is that of Dihydroxy-acid dehydratase from Bacillus cereus (strain ZK / E33L).